The following is a 436-amino-acid chain: 3-ketoacyl-CoA thiolase (436 aa).

The Acyl-thioester intermediate role is filled by Cys99. Active-site proton acceptor residues include His392 and Cys422.

This sequence belongs to the thiolase-like superfamily. Thiolase family. As to quaternary structure, heterotetramer of two alpha chains (FadJ) and two beta chains (FadI).

The protein localises to the cytoplasm. The enzyme catalyses an acyl-CoA + acetyl-CoA = a 3-oxoacyl-CoA + CoA. The protein operates within lipid metabolism; fatty acid beta-oxidation. Catalyzes the final step of fatty acid oxidation in which acetyl-CoA is released and the CoA ester of a fatty acid two carbons shorter is formed. The protein is 3-ketoacyl-CoA thiolase of Shewanella denitrificans (strain OS217 / ATCC BAA-1090 / DSM 15013).